A 455-amino-acid chain; its full sequence is tRNA modification GTPase MnmE (455 aa).

Arginine 24, glutamate 81, and lysine 120 together coordinate (6S)-5-formyl-5,6,7,8-tetrahydrofolate. Residues 216–378 enclose the TrmE-type G domain; the sequence is GMTVVIAGRP…LREHLKHCMG (163 aa). Asparagine 226 is a binding site for K(+). Residues 226-231, 245-251, 270-273, and 335-338 each bind GTP; these read NAGKSS, TDIAGTT, DTAG, and NKAD. Serine 230 contacts Mg(2+). Residues threonine 245, isoleucine 247, and threonine 250 each coordinate K(+). Threonine 251 provides a ligand contact to Mg(2+). Lysine 455 serves as a coordination point for (6S)-5-formyl-5,6,7,8-tetrahydrofolate.

This sequence belongs to the TRAFAC class TrmE-Era-EngA-EngB-Septin-like GTPase superfamily. TrmE GTPase family. Homodimer. Heterotetramer of two MnmE and two MnmG subunits. Requires K(+) as cofactor.

The protein resides in the cytoplasm. Its function is as follows. Exhibits a very high intrinsic GTPase hydrolysis rate. Involved in the addition of a carboxymethylaminomethyl (cmnm) group at the wobble position (U34) of certain tRNAs, forming tRNA-cmnm(5)s(2)U34. The polypeptide is tRNA modification GTPase MnmE (Stutzerimonas stutzeri (strain A1501) (Pseudomonas stutzeri)).